The chain runs to 165 residues: Chorismate pyruvate-lyase (165 aa).

Positions 35, 77, 115, and 156 each coordinate substrate.

It belongs to the UbiC family. As to quaternary structure, monomer.

Its subcellular location is the cytoplasm. The catalysed reaction is chorismate = 4-hydroxybenzoate + pyruvate. It participates in cofactor biosynthesis; ubiquinone biosynthesis. Its function is as follows. Removes the pyruvyl group from chorismate, with concomitant aromatization of the ring, to provide 4-hydroxybenzoate (4HB) for the ubiquinone pathway. This Salmonella agona (strain SL483) protein is Chorismate pyruvate-lyase.